Consider the following 204-residue polypeptide: uncharacterized protein (204 aa).

As to expression, component of the acid-soluble organic matrix of the aragonitic skeleton (at protein level).

The protein resides in the secreted. This is an uncharacterized protein from Acropora millepora (Staghorn coral).